An 85-amino-acid chain; its full sequence is MCRYALIVLVVVVVATNLSEANIFDVPTCEPNRIYKTCGPACPPTCEDPDPDCNETPQCKAGCFCIPGLIENMKGGNCISPSLCP.

An N-terminal signal peptide occupies residues 1–21 (MCRYALIVLVVVVVATNLSEA). 5 cysteine pairs are disulfide-bonded: cysteine 29–cysteine 63, cysteine 38–cysteine 59, cysteine 42–cysteine 53, cysteine 46–cysteine 84, and cysteine 65–cysteine 78. The TIL domain occupies 29-84 (CEPNRIYKTCGPACPPTCEDPDPDCNETPQCKAGCFCIPGLIENMKGGNCISPSLC).

This sequence belongs to the serine protease inhibitor-like (TIL domain-containing) family. As to expression, expressed by the venom gland.

The protein localises to the secreted. In terms of biological role, may be a phenoloxidase inhibitor that stabilizes or inhibits venom phenoloxidase while it is stored in the venom sac. This Pimpla hypochondriaca (Parasitoid wasp) protein is Cysteine-rich venom protein 1.